Reading from the N-terminus, the 1052-residue chain is Malignant fibrous histiocytoma-amplified sequence 1 (1052 aa).

N-acetylalanine is present on Ala-2. LRR repeat units follow at residues 64–85 (DIEA…LGSA), 88–109 (SLRV…VAEL), 112–133 (HLTE…VVSA), 136–157 (ELRK…LGAL), 159–180 (HLEE…LSCL), 182–203 (RLRT…LLQL), 205–226 (ALEE…ISAL), 228–249 (ALKI…FCEL), 251–272 (SLES…FSCL), 274–296 (RLKM…LPLA), 297–318 (GLEE…ISGL), 320–341 (RLLT…IVEL), and 343–364 (GLEE…FGQL). Residues 64-364 (DIEALNLGNN…AVLPDHFGQL (301 aa)) are required for interaction with PJA2. The tract at residues 64–649 (DIEALNLGNN…DKLLSVAEHR (586 aa)) is required for interaction with PPP2R2A. One can recognise a Roc domain in the interval 403–649 (QPAVQPRLKL…DKLLSVAEHR (247 aa)). Lys-601 is subject to N6-acetyllysine.

Interacts with RAF1. Interacts with HSPD1. Interacts with PPP2CA; retains PPP2CA into the cytoplasm and excludes it from the nucleus. Interacts with PPP2R2A; the interaction is direct. Interacts with PJA2. Post-translationally, ubiquitinated. Ubiquitination by PJA2 does not lead MFHAS1 to proteasomal degradation but positively regulates its function in polarization of macrophages. In terms of tissue distribution, ubiquitously expressed. Overexpressed in malignant fibrous histiocytomas. Expressed in red blood cells (at protein level).

It localises to the cytoplasm. Probable GTP-binding protein. Functions in innate immunity and more specifically the inflammatory response as a regulator of the Toll-like receptor TLR2 and TLR4 signaling pathways. Negatively regulates the part of the TLR4 signaling pathway that leads to the activation of the transcription factor AP-1. By retaining the phosphatase complex PP2A into the cytoplasm, prevents the dephosphorylation of the AP-1 subunit JUN which is required for proper activation of the transcription factor. Both inhibits and activates the TLR2-dependent signaling pathway. Positively regulates the TLR2 signaling pathway to activate specifically the downstream p38 and JNK MAP kinases and promote the polarization of macrophages toward the pro-inflammatory M1 phenotype. It may also play a role in the regulation of inflammation induced by high glucose through the PKB/AKT signaling pathway. Also involved in erythrocyte differentiation through activation of the ERK1/ERK2 signaling pathway. This is Malignant fibrous histiocytoma-amplified sequence 1 from Homo sapiens (Human).